Reading from the N-terminus, the 240-residue chain is Heme oxygenase 1 (240 aa).

Positions 10, 17, 125, 168, and 172 each coordinate heme b.

It belongs to the heme oxygenase family.

The catalysed reaction is heme b + 3 reduced [NADPH--hemoprotein reductase] + 3 O2 = biliverdin IXalpha + CO + Fe(2+) + 3 oxidized [NADPH--hemoprotein reductase] + 3 H2O + H(+). Catalyzes the opening of the heme ring with the release of iron. Key enzyme in the synthesis of the chromophoric part of the photosynthetic antennae. The polypeptide is Heme oxygenase 1 (pbsA1) (Synechocystis sp. (strain ATCC 27184 / PCC 6803 / Kazusa)).